The chain runs to 716 residues: Protein C-mannosyl-transferase DPY19L3 (716 aa).

The Cytoplasmic segment spans residues 1–43 (MMYIRQRKETKPIEVSEDFPSPKEDVKLEKKLPSGCASGRFWK). The chain crosses the membrane as a helical span at residues 44–64 (ILSSAVGGTVALCIGLLTSVY). Topologically, residues 65-154 (LATLHENDLW…RVLPIQKYLE (90 aa)) are lumenal. Asparagine 118 carries an N-linked (GlcNAc...) asparagine glycan. The chain crosses the membrane as a helical span at residues 155 to 182 (PVYFYIYTLFGLQAVYVTALYITSWLLS). At 183–184 (GT) the chain is on the cytoplasmic side. The segment at residues 185 to 197 (WLSGLLAALWYVT) is an intramembrane region (name=3). Over 198 to 215 (NRIDTTRVEFTIPLRENW) the chain is Cytoplasmic. An intramembrane region (name=4) is located at residues 216–230 (ALPFFAIQIAAITYF). Residues 231–239 (LRPNLQPLS) are Cytoplasmic-facing. Residues 240–256 (ERLTLLAIFVSTFLFSL) form a helical membrane-spanning segment. Topologically, residues 257–262 (TWQFNQ) are lumenal. Residues 263–279 (FMMLLQALVLFILDSLD) traverse the membrane as a helical segment. The Cytoplasmic portion of the chain corresponds to 280–289 (MLPAMKATWL). The helical transmembrane segment at 290-306 (YGIQISCLLLVCTLQFF) threads the bilayer. The Lumenal segment spans residues 307-308 (NS). Residues 309–323 (MILGSLLISFNLSVL) form a helical membrane-spanning segment. The Cytoplasmic segment spans residues 324–338 (IVRKLQKNLKTGSFL). Residues 339–359 (TRIWKLLLHLLLVFCLTLFLN) form a helical membrane-spanning segment. Over 360 to 414 (NIIKKVLNLKSDEHIFKFLKAKFGFGATRDFDANLYLCEEAFGLLPLNTFQRLSE) the chain is Lumenal. Residues 415–437 (TLLFYAYMFVLVVTVVTASVVAF) form a helical membrane-spanning segment. The Cytoplasmic portion of the chain corresponds to 438-465 (HNLSDSTSLKSMDQTRKRAVDLKPEAAY). The helical transmembrane segment at 466–485 (NLIHTILFGVLALSTMRMKY) threads the bilayer. Residues 486–487 (LW) lie on the Lumenal side of the membrane. Residues 488–499 (TSHMCVFASFGL) form a helical membrane-spanning segment. Over 500 to 522 (CSSEVWELLLRLVHLCNPKRIWV) the chain is Cytoplasmic. Residues 523-539 (LRYLVPVLTLLYLCYKS) form a helical membrane-spanning segment. At 540 to 716 (WPGVMDELSE…FHVYKLSRNK (177 aa)) the chain is on the lumenal side. An N-linked (GlcNAc...) asparagine glycan is attached at asparagine 704.

The protein belongs to the dpy-19 family.

The protein localises to the endoplasmic reticulum membrane. It carries out the reaction L-tryptophyl-[protein] + a di-trans,poly-cis-dolichyl beta-D-mannosyl phosphate = C-alpha-D-mannosyl-L-tryptophyl-[protein] + a di-trans,poly-cis-dolichyl phosphate + H(+). The protein operates within protein modification; protein glycosylation. C-mannosyltransferase that mediates C-mannosylation of tryptophan residues on target proteins. The reaction occurs on the luminal side of the endoplasmic reticulum and involves the transfer of a mannose unit from a dolichylphosphate mannose (Dol-P-Man) donor to an acceptor protein containing a WxxW or WxxC consensus sequence. C-mannosylates RSPO1, a Wnt signaling regulator, preferentially at the first Trp residue in the sequence WxxW. C-mannosylates the netrin receptor UNC5A, preferentially at the third tryptophan of WxxWxxWxxC sequence. In Mus musculus (Mouse), this protein is Protein C-mannosyl-transferase DPY19L3 (Dpy19l3).